The primary structure comprises 104 residues: Large ribosomal subunit protein uL24 (104 aa).

It belongs to the universal ribosomal protein uL24 family. As to quaternary structure, part of the 50S ribosomal subunit.

One of two assembly initiator proteins, it binds directly to the 5'-end of the 23S rRNA, where it nucleates assembly of the 50S subunit. In terms of biological role, one of the proteins that surrounds the polypeptide exit tunnel on the outside of the subunit. The sequence is that of Large ribosomal subunit protein uL24 from Shewanella woodyi (strain ATCC 51908 / MS32).